The sequence spans 171 residues: Transcription antitermination protein NusB (171 aa).

It belongs to the NusB family.

Functionally, involved in transcription antitermination. Required for transcription of ribosomal RNA (rRNA) genes. Binds specifically to the boxA antiterminator sequence of the ribosomal RNA (rrn) operons. The chain is Transcription antitermination protein NusB from Brucella melitensis biotype 1 (strain ATCC 23456 / CCUG 17765 / NCTC 10094 / 16M).